The following is a 366-amino-acid chain: Neutral protease 2 homolog MGYG_04094 (366 aa).

Positions 1 to 19 are cleaved as a signal peptide; the sequence is MQILAALSAIGALVATATA. A propeptide spanning residues 20 to 188 is cleaved from the precursor; sequence AAVPNAPAKQ…NKSRSTIDKR (169 aa). Disulfide bonds link Cys-196-Cys-267 and Cys-274-Cys-292. Residue His-317 coordinates Zn(2+). The active site involves Glu-318. Zn(2+)-binding residues include His-321 and Asp-332.

This sequence belongs to the peptidase M35 family. Zn(2+) serves as cofactor.

The protein localises to the secreted. The enzyme catalyses Preferential cleavage of bonds with hydrophobic residues in P1'. Also 3-Asn-|-Gln-4 and 8-Gly-|-Ser-9 bonds in insulin B chain.. Secreted metalloproteinase that allows assimilation of proteinaceous substrates. Shows high activities on basic nuclear substrates such as histone and protamine. May be involved in virulence. In Arthroderma gypseum (strain ATCC MYA-4604 / CBS 118893) (Microsporum gypseum), this protein is Neutral protease 2 homolog MGYG_04094.